Reading from the N-terminus, the 788-residue chain is Spastin (788 aa).

Positions 1 to 105 are disordered; sequence MVRTKNQSSS…PRSAGGPSSV (105 aa). At 1 to 116 the chain is on the cytoplasmic side; it reads MVRTKNQSSS…KQNLYVVSFP (116 aa). Residues 1-227 are required for localization to punctate cytoplasmic foci; it reads MVRTKNQSSS…NRSGSGYSPG (227 aa). Low complexity-rich tracts occupy residues 8–48 and 57–75; these read SSSS…SSHR and ATNV…SSPD. The helical intramembrane region spans 117 to 137; the sequence is IIFLFNVLRSLIYQLFCIFRY. Residues 138 to 788 are Cytoplasmic-facing; sequence LYGASTKVIY…WSSDYGDITI (651 aa). Positions 227 to 788 are sufficient for interaction with microtubules and microtubule severing; the sequence is GPGDPLLAKQ…WSSDYGDITI (562 aa). In terms of domain architecture, MIT spans 240 to 315; sequence HRRAFEYISK…SMARDRLHFL (76 aa). A compositionally biased stretch (basic and acidic residues) spans 331 to 353; that stretch reads EKQKANESREQQQKPQKAREAAD. The disordered stretch occupies residues 331–484; sequence EKQKANESRE…SGSGSGASTP (154 aa). A compositionally biased stretch (low complexity) spans 387–400; sequence ATATTPTSSSSLAS. 2 stretches are compositionally biased toward polar residues: residues 419-433 and 453-469; these read NKSQ…SKTS and QFSS…RTPI. Positions 471–485 are required for interaction with microtubules; sequence NNGASGSGSGASTPV. 553-560 contacts ATP; it reads GPPGNGKT.

This sequence belongs to the AAA ATPase family. Spastin subfamily. In terms of assembly, homohexamer. The homohexamer is stabilized by ATP-binding. The homohexamer may adopt a ring conformation through which microtubules pass prior to being severed. Interacts with microtubules. Interacts with atl; may be involved in microtubule dynamics.

Its subcellular location is the membrane. The protein localises to the cytoplasm. The protein resides in the cytoskeleton. It localises to the microtubule organizing center. It is found in the centrosome. Its subcellular location is the chromosome. The protein localises to the lipid droplet. It catalyses the reaction n ATP + n H2O + a microtubule = n ADP + n phosphate + (n+1) alpha/beta tubulin heterodimers.. Functionally, ATP-dependent microtubule severing protein. Stimulates microtubule minus-end depolymerization and poleward microtubule flux in the mitotic spindle. Regulates microtubule stability in the neuromuscular junction synapse. Involved in lipid metabolism by regulating the size and distribution of lipid droplets. Involved in axon regeneration by regulating microtubule severing. This Drosophila persimilis (Fruit fly) protein is Spastin.